A 183-amino-acid polypeptide reads, in one-letter code: Ribosome maturation factor RimP (183 aa).

This sequence belongs to the RimP family.

Its subcellular location is the cytoplasm. In terms of biological role, required for maturation of 30S ribosomal subunits. The polypeptide is Ribosome maturation factor RimP (Mycobacterium bovis (strain ATCC BAA-935 / AF2122/97)).